Consider the following 499-residue polypeptide: Pentatricopeptide repeat-containing protein PPR5, chloroplastic (499 aa).

Positions 1-12 are enriched in low complexity; sequence MLACPSTSSPWP. Residues 1-28 form a disordered region; that stretch reads MLACPSTSSPWPQRQPPSPCPGGGGGAT. Residues 1 to 45 constitute a chloroplast transit peptide; the sequence is MLACPSTSSPWPQRQPPSPCPGGGGGATRHVALAARSKRRGAGPA. PPR repeat units follow at residues 123–157, 158–193, 198–232, 233–267, 268–302, 303–337, 338–372, 373–407, and 408–442; these read DNGIYSKLISVMGRKGQIRMAMWLFSQMRNSGCKP, DTSVYNSLIGAHLHSRDKTKALAKALGYFEKMKCIE, TIVTYNILLRAFAQAGDTKQVDMLFKDLDESVVSP, DVYTYNGVLDAYGKNGMIKEMESVLVRMKSTQCRP, DVITFNILIDSYGRKQTFDKMEQVFKSLLRSKERP, THPTFNSMITNYGRARLREKAESVVEKMEELGFKP, NYVTQECLIIMYAHCDCVSKARQVFDELVTSQTKV, HLSSLNSMLEAYCMNGLHTEADRLLDTALQQCVVP, and NGSTYKLLYKAYTKANDKLLVQKLLKRMNKQGIVP. The segment at 458–499 is disordered; that stretch reads DRKPRTSPGINSASKPSTDSAGDSETATSDKPEVSVWHVAAT. Over residues 465–484 the composition is skewed to polar residues; it reads PGINSASKPSTDSAGDSETA.

Belongs to the PPR family. P subfamily.

Its subcellular location is the plastid. The protein resides in the chloroplast. Functionally, involved in the biogenesis of the plastid translation machinery by promoting the splicing of group II introns in chloroplasts. Stabilizes the chloroplast trnG pre-RNA by directly binding to a group II intron, where it protects an endonuclease-sensitive site and stimulates splicing. Binds specific sites within group II intron trnG pre-RNA. Binds with high affinity to the 5'-UTR of the chloroplastic petA mRNA. The chain is Pentatricopeptide repeat-containing protein PPR5, chloroplastic from Zea mays (Maize).